Reading from the N-terminus, the 197-residue chain is MVHFSDSLSRLLAELQKLPGVGEKTALRLAFHLLKSPDNAAALADSLRDVMSRVRFCSVCFGITEDDPCRFCSDARDDGAICVVEEPQDLLAVERTRAFRGRYHVLQGALSPLNGVTPDRLRVAELMKRLEGGGVREVVIATNFTVEGEATALYLARMIKPLGVRVTRLAHGIPLGSDLEFVDAATVQRALEGRSEL.

The segment at 57-72 (CSVCFGITEDDPCRFC) adopts a C4-type zinc-finger fold. Residues 79–174 (GAICVVEEPQ…RVTRLAHGIP (96 aa)) enclose the Toprim domain.

The protein belongs to the RecR family.

Its function is as follows. May play a role in DNA repair. It seems to be involved in an RecBC-independent recombinational process of DNA repair. It may act with RecF and RecO. The chain is Recombination protein RecR from Geobacter sulfurreducens (strain ATCC 51573 / DSM 12127 / PCA).